The chain runs to 298 residues: ATP synthase gamma chain (298 aa).

Belongs to the ATPase gamma chain family. As to quaternary structure, F-type ATPases have 2 components, CF(1) - the catalytic core - and CF(0) - the membrane proton channel. CF(1) has five subunits: alpha(3), beta(3), gamma(1), delta(1), epsilon(1). CF(0) has three main subunits: a, b and c.

It is found in the cell membrane. Its function is as follows. Produces ATP from ADP in the presence of a proton gradient across the membrane. The gamma chain is believed to be important in regulating ATPase activity and the flow of protons through the CF(0) complex. The chain is ATP synthase gamma chain from Mycobacterium leprae (strain Br4923).